The primary structure comprises 713 residues: Bifunctional protein gal10 (713 aa).

Positions 1 to 350 are galactowaldenase; the sequence is MAVQDEYILV…TIENPFGFQI (350 aa). Residue 7 to 38 coordinates NAD(+); that stretch reads YILVTGGAGYIGSHTVIELINHGYKVIIVDNL. The tract at residues 351 to 713 is mutarotase; it reads DNYKWKLFNT…SASYNSGEYY (363 aa). The active-site For mutarotase activity is H532.

The protein in the N-terminal section; belongs to the NAD(P)-dependent epimerase/dehydratase family. It in the C-terminal section; belongs to the aldose epimerase family. Requires NAD(+) as cofactor.

It carries out the reaction UDP-alpha-D-glucose = UDP-alpha-D-galactose. The enzyme catalyses alpha-D-glucose = beta-D-glucose. It participates in carbohydrate metabolism; galactose metabolism. Its pathway is carbohydrate metabolism; hexose metabolism. Functionally, mutarotase converts alpha-aldose to the beta-anomer. It is active on D-glucose, L-arabinose, D-xylose, D-galactose, maltose and lactose. This Schizosaccharomyces pombe (strain 972 / ATCC 24843) (Fission yeast) protein is Bifunctional protein gal10 (gal10).